The primary structure comprises 174 residues: Shikimate kinase 2 (174 aa).

An ATP-binding site is contributed by 12-17 (GAGKTT). Residues threonine 16 and aspartate 32 each contribute to the Mg(2+) site. Residues aspartate 34, arginine 58, and glycine 79 each coordinate substrate. The LID domain stretch occupies residues 112–126 (MQQPESTQRPSLTGK). Arginine 120 provides a ligand contact to ATP. Arginine 139 is a substrate binding site.

Belongs to the shikimate kinase family. AroL subfamily. In terms of assembly, monomer. Requires Mg(2+) as cofactor.

Its subcellular location is the cytoplasm. It carries out the reaction shikimate + ATP = 3-phosphoshikimate + ADP + H(+). It functions in the pathway metabolic intermediate biosynthesis; chorismate biosynthesis; chorismate from D-erythrose 4-phosphate and phosphoenolpyruvate: step 5/7. Catalyzes the specific phosphorylation of the 3-hydroxyl group of shikimic acid using ATP as a cosubstrate. The protein is Shikimate kinase 2 of Photorhabdus laumondii subsp. laumondii (strain DSM 15139 / CIP 105565 / TT01) (Photorhabdus luminescens subsp. laumondii).